A 118-amino-acid chain; its full sequence is UPF0145 protein PTO0347 (118 aa).

The protein belongs to the UPF0145 family.

This Picrophilus torridus (strain ATCC 700027 / DSM 9790 / JCM 10055 / NBRC 100828 / KAW 2/3) protein is UPF0145 protein PTO0347.